The chain runs to 176 residues: Disulfide bond formation protein B (176 aa).

The Cytoplasmic segment spans residues 1–14; the sequence is MLRFLNQCSQGRGA. Residues 15 to 31 traverse the membrane as a helical segment; sequence WLLMAFTALALELTALW. Over 32–49 the chain is Periplasmic; the sequence is FQHVMLLKPCVLCIYERC. A disulfide bridge links Cys41 with Cys44. The helical transmembrane segment at 50–65 threads the bilayer; that stretch reads ALFGVLGAALIGAIAP. The Cytoplasmic portion of the chain corresponds to 66–71; the sequence is KTPLRY. Residues 72–89 form a helical membrane-spanning segment; that stretch reads VAMVIWLYSAFRGVQLTY. Over 90 to 144 the chain is Periplasmic; it reads EHTMLQLYPSPFATCDFMARFPEWLPLDKWVPQVFVASGDCAERQWEFLGLEMPQ. An intrachain disulfide couples Cys104 to Cys130. A helical membrane pass occupies residues 145–163; the sequence is WLLGIFIAYLIVAVLVVIS. Residues 164 to 176 are Cytoplasmic-facing; that stretch reads QPFKAKKRDLFGR.

The protein belongs to the DsbB family.

The protein resides in the cell inner membrane. In terms of biological role, required for disulfide bond formation in some periplasmic proteins. Acts by oxidizing the DsbA protein. This chain is Disulfide bond formation protein B, found in Escherichia coli O1:K1 / APEC.